Consider the following 229-residue polypeptide: uncharacterized protein (229 aa).

The first 26 residues, 1–26 (MSRNDARYLRCTAALGAAFFACGAAA), serve as a signal peptide directing secretion.

This sequence belongs to the OmpW/AlkL family.

The protein resides in the cell outer membrane. This is an uncharacterized protein from Sinorhizobium fredii (strain NBRC 101917 / NGR234).